We begin with the raw amino-acid sequence, 641 residues long: MGRRSTSSTKSGKFMNPTDQARKEARKRELKKNKKQRMMVRAAVLKMKDPKQIIRDMEKLDEMEFNPVQQPQLNEKVLKDKRKKLRETFERILRLYEKENPDIYKELRKLEVEYEQKRAQLSQYFDAVKNAQHVEVESIPLPDMPHAPSNILIQDIPLPGAQPPSILKKTSAYGPPTRAVSILPLLGHGVPRLPPGRKPPGPPPGPPPPQVLQMYGRKVGFALDLPPRRRDEDMLYSPELAQRGHDDDMSSTSEDDGYPEDMDQDKHDDSTEDSDTDRSDAESDGDEFGHRDDSERDNTEEKKSGLSVRFADMPGKSRKKKKNMKELTPLQAMMLRMAGQEIPEEGREVEEFSEEEDDDDSEDSEAEKPSQKQHKEDSHADGSSAASSQQQAPPQAVPPSQIQAPPMPGPPPLGPPPAPPLRPPGPPTGLPPGPPPGAPPFLRPPGMPGIRGPLPRLLPPGPPPGRPPGPPPGPPPGLPPGPPPRGPPPRLPPPAPPGIPPPRPGMMRPPLVPPLGPAPPGLFPPAPLPNPGVLSAPPSLIQRPKADDASAATIEKKATATISAKPQITNPKAEVTRFVPTALRVRRENKGATAVPQRRSEEDSAVPVAKAAPRSGPSVPVSVQTKDDVYEAFMKEMEGLL.

The span at 1–11 shows a compositional bias: polar residues; sequence MGRRSTSSTKS. Residues 1-37 form a disordered region; it reads MGRRSTSSTKSGKFMNPTDQARKEARKRELKKNKKQR. Residues 1–45 form a required for nuclear import region; the sequence is MGRRSTSSTKSGKFMNPTDQARKEARKRELKKNKKQRMMVRAAVL. The residue at position 13 (Lys-13) is an N6-acetyllysine. Residues 28–37 show a composition bias toward basic residues; that stretch reads RELKKNKKQR. Residues 75–133 are a coiled coil; the sequence is EKVLKDKRKKLRETFERILRLYEKENPDIYKELRKLEVEYEQKRAQLSQYFDAVKNAQH. At Ser-181 the chain carries Phosphoserine. The tract at residues 186–213 is disordered; it reads LGHGVPRLPPGRKPPGPPPGPPPPQVLQ. Arg-192 carries the omega-N-methylarginine modification. Residues 192–210 show a composition bias toward pro residues; that stretch reads RLPPGRKPPGPPPGPPPPQ. Residues 217–221 form an interaction with PP1 region; sequence RKVGF. Residue Tyr-236 is modified to Phosphotyrosine. A disordered region spans residues 236–549; sequence YSPELAQRGH…LIQRPKADDA (314 aa). A Phosphoserine modification is found at Ser-237. The segment covering 253-263 has biased composition (acidic residues); that stretch reads SEDDGYPEDMD. Positions 276-304 are enriched in basic and acidic residues; sequence TDRSDAESDGDEFGHRDDSERDNTEEKKS. Phosphoserine is present on residues Ser-279 and Ser-283. The tract at residues 306–310 is interaction with PP1; it reads LSVRF. Residues 351–365 are compositionally biased toward acidic residues; it reads EFSEEEDDDDSEDSE. Ser-353, Ser-361, and Ser-364 each carry phosphoserine. Over residues 366 to 380 the composition is skewed to basic and acidic residues; sequence AEKPSQKQHKEDSHA. Positions 381–404 are enriched in low complexity; the sequence is DGSSAASSQQQAPPQAVPPSQIQA. 3 stretches are compositionally biased toward pro residues: residues 405–447, 456–504, and 510–530; these read PPMP…PPGM, RLLP…PPRP, and PLVPPLGPAPPGLFPPAPLPN. The PGR motif lies at 455 to 466; it reads PRLLPPGPPPGR. Lys-557 participates in a covalent cross-link: Glycyl lysine isopeptide (Lys-Gly) (interchain with G-Cter in SUMO2). Lys-565 bears the N6-acetyllysine mark. Residue Lys-572 forms a Glycyl lysine isopeptide (Lys-Gly) (interchain with G-Cter in SUMO2) linkage. The interval 588 to 623 is disordered; the sequence is ENKGATAVPQRRSEEDSAVPVAKAAPRSGPSVPVSV. Phosphoserine is present on Ser-600.

As to quaternary structure, interacts with PPP1CA, PPP1CB and PPP1CC. Interacts via the PGR motif with PQBP1 in the nucleus. Interacts with the WW domains of WBP4.

The protein localises to the nucleus. Its subcellular location is the cytoplasm. Activates pre-mRNA splicing. May inhibit PP1 phosphatase activity. This chain is WW domain-binding protein 11 (Wbp11), found in Rattus norvegicus (Rat).